We begin with the raw amino-acid sequence, 102 residues long: Small ribosomal subunit protein uS10 (102 aa).

This sequence belongs to the universal ribosomal protein uS10 family. In terms of assembly, part of the 30S ribosomal subunit.

In terms of biological role, involved in the binding of tRNA to the ribosomes. The protein is Small ribosomal subunit protein uS10 of Rhodopseudomonas palustris (strain HaA2).